Consider the following 278-residue polypeptide: NAD-dependent protein deacylase (278 aa).

The Deacetylase sirtuin-type domain occupies 22-270; sequence RSRIFHRDSA…PEYIREFLTT (249 aa). 46 to 65 contacts NAD(+); that stretch reads GAGISAESGIRTFRADDGLW. Substrate contacts are provided by Tyr90 and Arg93. 127-130 serves as a coordination point for NAD(+); the sequence is QNID. His145 functions as the Proton acceptor in the catalytic mechanism. Zn(2+) is bound by residues Cys153 and Cys172. NAD(+) is bound by residues 212–214, 238–240, and Ala256; these read GTS and NLE.

It belongs to the sirtuin family. Class III subfamily. The cofactor is Zn(2+).

It localises to the cytoplasm. It catalyses the reaction N(6)-acetyl-L-lysyl-[protein] + NAD(+) + H2O = 2''-O-acetyl-ADP-D-ribose + nicotinamide + L-lysyl-[protein]. The enzyme catalyses N(6)-succinyl-L-lysyl-[protein] + NAD(+) + H2O = 2''-O-succinyl-ADP-D-ribose + nicotinamide + L-lysyl-[protein]. It carries out the reaction N(6)-(2-hydroxyisobutanoyl)-L-lysyl-[protein] + NAD(+) + H2O = 2''-O-(2-hydroxyisobutanoyl)-ADP-D-ribose + nicotinamide + L-lysyl-[protein]. NAD-dependent lysine deacetylase that specifically removes acetyl groups on target proteins. Also acts as a protein-lysine deacylase by mediating protein desuccinylation and de-2-hydroxyisobutyrylation. Modulates the activities of several proteins which are inactive in their acylated form. In Yersinia pestis, this protein is NAD-dependent protein deacylase.